The following is a 200-amino-acid chain: ATP-dependent Clp protease proteolytic subunit 2 (200 aa).

The Nucleophile role is filled by Ser101. His126 is a catalytic residue.

It belongs to the peptidase S14 family. As to quaternary structure, fourteen ClpP subunits assemble into 2 heptameric rings which stack back to back to give a disk-like structure with a central cavity, resembling the structure of eukaryotic proteasomes.

The protein resides in the cytoplasm. The enzyme catalyses Hydrolysis of proteins to small peptides in the presence of ATP and magnesium. alpha-casein is the usual test substrate. In the absence of ATP, only oligopeptides shorter than five residues are hydrolyzed (such as succinyl-Leu-Tyr-|-NHMec, and Leu-Tyr-Leu-|-Tyr-Trp, in which cleavage of the -Tyr-|-Leu- and -Tyr-|-Trp bonds also occurs).. Functionally, cleaves peptides in various proteins in a process that requires ATP hydrolysis. Has a chymotrypsin-like activity. Plays a major role in the degradation of misfolded proteins. This Prochlorococcus marinus (strain NATL2A) protein is ATP-dependent Clp protease proteolytic subunit 2.